We begin with the raw amino-acid sequence, 288 residues long: Elongation factor Ts (288 aa).

An involved in Mg(2+) ion dislocation from EF-Tu region spans residues 80–83 (TDFV).

This sequence belongs to the EF-Ts family.

It localises to the cytoplasm. Its function is as follows. Associates with the EF-Tu.GDP complex and induces the exchange of GDP to GTP. It remains bound to the aminoacyl-tRNA.EF-Tu.GTP complex up to the GTP hydrolysis stage on the ribosome. The polypeptide is Elongation factor Ts (Chromobacterium violaceum (strain ATCC 12472 / DSM 30191 / JCM 1249 / CCUG 213 / NBRC 12614 / NCIMB 9131 / NCTC 9757 / MK)).